Consider the following 509-residue polypeptide: Maturase K (509 aa).

The protein belongs to the intron maturase 2 family. MatK subfamily.

Its subcellular location is the plastid. It localises to the chloroplast. Functionally, usually encoded in the trnK tRNA gene intron. Probably assists in splicing its own and other chloroplast group II introns. The chain is Maturase K from Nicotiana paniculata.